The primary structure comprises 1199 residues: Putative pyruvate-flavodoxin oxidoreductase (1199 aa).

4Fe-4S ferredoxin-type domains lie at 681-710 and 737-766; these read EIPV…GKVY and FTIQ…QPRL. Residues Cys-690, Cys-693, Cys-696, Cys-700, Cys-746, Cys-749, Cys-752, Cys-756, Cys-820, Cys-823, Cys-848, and Cys-1079 each contribute to the [4Fe-4S] cluster site.

This sequence belongs to the pyruvate:ferredoxin/flavodoxin oxidoreductase family. [4Fe-4S] cluster is required as a cofactor.

It catalyses the reaction oxidized [flavodoxin] + pyruvate + CoA + 2 H(+) = reduced [flavodoxin] + acetyl-CoA + CO2. Oxidoreductase required for the transfer of electrons from pyruvate to flavodoxin. This chain is Putative pyruvate-flavodoxin oxidoreductase (nifJ), found in Synechocystis sp. (strain ATCC 27184 / PCC 6803 / Kazusa).